The following is a 92-amino-acid chain: MGRSLKKGPFVDGHLMKKVEAQANDEKKKVIKTWSRRSTIFPSFIGYTIAVYDGRKHVPVYIQEDMVGHKLGEFAPTRTYKGHAADDKKTRR.

This sequence belongs to the universal ribosomal protein uS19 family.

Its function is as follows. Protein S19 forms a complex with S13 that binds strongly to the 16S ribosomal RNA. In Streptococcus thermophilus (strain ATCC BAA-491 / LMD-9), this protein is Small ribosomal subunit protein uS19.